The primary structure comprises 302 residues: tRNA dimethylallyltransferase 1 (302 aa).

6-13 contacts ATP; that stretch reads GPTACGKT. Substrate is bound at residue 8-13; the sequence is TACGKT. Interaction with substrate tRNA stretches follow at residues 31 to 34 and 154 to 158; these read DSRQ and QRAIR.

It belongs to the IPP transferase family. In terms of assembly, monomer. Mg(2+) serves as cofactor.

It carries out the reaction adenosine(37) in tRNA + dimethylallyl diphosphate = N(6)-dimethylallyladenosine(37) in tRNA + diphosphate. Functionally, catalyzes the transfer of a dimethylallyl group onto the adenine at position 37 in tRNAs that read codons beginning with uridine, leading to the formation of N6-(dimethylallyl)adenosine (i(6)A). The polypeptide is tRNA dimethylallyltransferase 1 (Porphyromonas gingivalis (strain ATCC 33277 / DSM 20709 / CIP 103683 / JCM 12257 / NCTC 11834 / 2561)).